A 460-amino-acid chain; its full sequence is uncharacterized protein (460 aa).

In terms of domain architecture, TRAM spans 6–64 (PVKKNNDYEIYIDDFGNMGEGIGKIDNFTVFVKDAVKGEKVRAKIIKVNKSFAIGKLID). The [4Fe-4S] cluster site is built by Cys-77, Cys-83, Cys-86, and Cys-166. S-adenosyl-L-methionine-binding residues include Gln-290, Tyr-319, Glu-340, and Asp-388. The active-site Nucleophile is Cys-415.

The protein belongs to the class I-like SAM-binding methyltransferase superfamily. RNA M5U methyltransferase family.

This is an uncharacterized protein from Clostridium acetobutylicum (strain ATCC 824 / DSM 792 / JCM 1419 / IAM 19013 / LMG 5710 / NBRC 13948 / NRRL B-527 / VKM B-1787 / 2291 / W).